The chain runs to 209 residues: SAGA-associated factor 11 homolog 1 (209 aa).

Residues Met1–Lys36 are disordered. The SGF11-type zinc-finger motif lies at Cys120 to Cys141. Residues Leu156–Ser166 are compositionally biased toward low complexity. A disordered region spans residues Leu156 to Lys209. Residues Lys193–Lys209 are compositionally biased toward basic residues.

Belongs to the SGF11 family. As to quaternary structure, component of some SAGA transcription coactivator-HAT complexes, at least composed of Ada2b, not/nonstop, Pcaf/Gcn5, Sgf11 and Spt3. Within the SAGA complex, Sgf11, e(y)2, and not/nonstop form an additional subcomplex of SAGA called the DUB module (deubiquitination module). Interacts directly with not/nonstop. Interacts with the AMEX complex component xmas-2. Interacts with Cbp80; important for promoter recruitment of Sgf11 that is not associated with the DUB module.

It localises to the nucleus. Its subcellular location is the nucleoplasm. The protein localises to the cytoplasm. Component of the transcription regulatory histone acetylation (HAT) complex SAGA, a multiprotein complex that activates transcription by remodeling chromatin and mediating histone acetylation and deubiquitination. Within the SAGA complex, participates in a subcomplex that specifically deubiquitinates histone H2B. The SAGA complex is recruited to specific gene promoters by activators, where it is required for transcription. Required for nuclear receptor-mediated transactivation. Binds independently on SAGA to promoters in an RNA-dependent manner. Binds to mRNA and is essential for total mRNA export from the nucleus. Required to counteract heterochromatin silencing. Controls the development of neuronal connectivity in visual system by being required for accurate axon targeting in the optic lobe. Required for expression of ecdysone-induced genes such as br/broad. The chain is SAGA-associated factor 11 homolog 1 from Drosophila willistoni (Fruit fly).